The following is a 424-amino-acid chain: UDP-N-acetylglucosamine 1-carboxyvinyltransferase (424 aa).

Position 22–23 (K22–N23) interacts with phosphoenolpyruvate. R93 is a binding site for UDP-N-acetyl-alpha-D-glucosamine. Residue C117 is the Proton donor of the active site. A 2-(S-cysteinyl)pyruvic acid O-phosphothioketal modification is found at C117. UDP-N-acetyl-alpha-D-glucosamine-binding positions include R122 to L126, K162 to V165, D307, and I329.

It belongs to the EPSP synthase family. MurA subfamily.

The protein resides in the cytoplasm. It carries out the reaction phosphoenolpyruvate + UDP-N-acetyl-alpha-D-glucosamine = UDP-N-acetyl-3-O-(1-carboxyvinyl)-alpha-D-glucosamine + phosphate. It functions in the pathway cell wall biogenesis; peptidoglycan biosynthesis. In terms of biological role, cell wall formation. Adds enolpyruvyl to UDP-N-acetylglucosamine. The chain is UDP-N-acetylglucosamine 1-carboxyvinyltransferase from Histophilus somni (strain 129Pt) (Haemophilus somnus).